Reading from the N-terminus, the 33-residue chain is Dermaseptin DS VIII-like peptide (33 aa).

Alanine amide is present on Ala33.

Expressed by the parotoid glands.

It localises to the secreted. In terms of biological role, possesses a potent antimicrobial activity against bacteria, fungi and protozoa. Probably acts by disturbing membrane functions with its amphipathic structure. The polypeptide is Dermaseptin DS VIII-like peptide (Phyllomedusa burmeisteri (Brazilian common walking leaf frog)).